An 88-amino-acid chain; its full sequence is Small ribosomal subunit protein bS18 (88 aa).

Belongs to the bacterial ribosomal protein bS18 family. Part of the 30S ribosomal subunit. Forms a tight heterodimer with protein bS6.

Functionally, binds as a heterodimer with protein bS6 to the central domain of the 16S rRNA, where it helps stabilize the platform of the 30S subunit. In Syntrophus aciditrophicus (strain SB), this protein is Small ribosomal subunit protein bS18.